Here is a 274-residue protein sequence, read N- to C-terminus: D-aminopeptidase (274 aa).

Zn(2+) contacts are provided by D8, E10, H60, and H104. H115 functions as the Nucleophile in the catalytic mechanism. E133 serves as a coordination point for Zn(2+).

This sequence belongs to the peptidase M55 family. As to quaternary structure, homodecamer. A 20 Angstroms wide channel runs through the complex, giving access to a central chamber holding the active sites. It depends on Zn(2+) as a cofactor.

Its function is as follows. Hydrolyzes N-terminal residues in D-amino acid containing peptides. Among the tested substrates, the highest activities are with D-Ala-D-Ala and D-Ala-Gly-Gly. The physiological role is not clear. This Bacillus subtilis (strain 168) protein is D-aminopeptidase (dppA).